The chain runs to 302 residues: N-acetyl-D-glucosamine kinase (302 aa).

ATP-binding positions include 4 to 11 (GFDVGGTK) and 133 to 140 (GFGGGLVY). Zn(2+) is bound by residues His-157, Cys-177, Cys-179, and Cys-184.

Belongs to the ROK (NagC/XylR) family. NagK subfamily.

It catalyses the reaction N-acetyl-D-glucosamine + ATP = N-acetyl-D-glucosamine 6-phosphate + ADP + H(+). It functions in the pathway cell wall biogenesis; peptidoglycan recycling. Functionally, catalyzes the phosphorylation of N-acetyl-D-glucosamine (GlcNAc) derived from cell-wall degradation, yielding GlcNAc-6-P. This Vibrio atlanticus (strain LGP32) (Vibrio splendidus (strain Mel32)) protein is N-acetyl-D-glucosamine kinase.